A 205-amino-acid chain; its full sequence is MIAHLRGELVTAGADWVVIDVAGVGYRCLVPASTRSRLPAQGAAVQLYTYLQVREDALTLYGFLTQAEYDLFELLLRVDGVGPKVALAVLSTTDPAAFRRAVAFEDLDAICRVPGIGRKTAQRLVLELKDKIGAVPAGGGGVPDGLPVAVAPAGDAWAEASEALIALGYSRGEAAAALARVRAEAGEAPSVETLVRLALKQLYRG.

The tract at residues 1–64 is domain I; it reads MIAHLRGELV…EDALTLYGFL (64 aa). Residues 65–143 form a domain II region; sequence TQAEYDLFEL…AVPAGGGGVP (79 aa). Residues 144-153 form a flexible linker region; that stretch reads DGLPVAVAPA. The tract at residues 153-205 is domain III; that stretch reads AGDAWAEASEALIALGYSRGEAAAALARVRAEAGEAPSVETLVRLALKQLYRG.

This sequence belongs to the RuvA family. As to quaternary structure, homotetramer. Forms an RuvA(8)-RuvB(12)-Holliday junction (HJ) complex. HJ DNA is sandwiched between 2 RuvA tetramers; dsDNA enters through RuvA and exits via RuvB. An RuvB hexamer assembles on each DNA strand where it exits the tetramer. Each RuvB hexamer is contacted by two RuvA subunits (via domain III) on 2 adjacent RuvB subunits; this complex drives branch migration. In the full resolvosome a probable DNA-RuvA(4)-RuvB(12)-RuvC(2) complex forms which resolves the HJ.

It is found in the cytoplasm. Its function is as follows. The RuvA-RuvB-RuvC complex processes Holliday junction (HJ) DNA during genetic recombination and DNA repair, while the RuvA-RuvB complex plays an important role in the rescue of blocked DNA replication forks via replication fork reversal (RFR). RuvA specifically binds to HJ cruciform DNA, conferring on it an open structure. The RuvB hexamer acts as an ATP-dependent pump, pulling dsDNA into and through the RuvAB complex. HJ branch migration allows RuvC to scan DNA until it finds its consensus sequence, where it cleaves and resolves the cruciform DNA. The protein is Holliday junction branch migration complex subunit RuvA of Symbiobacterium thermophilum (strain DSM 24528 / JCM 14929 / IAM 14863 / T).